The primary structure comprises 466 residues: Protein hob1 (466 aa).

Residues 17–269 (LRSKFNVGEI…RGDVKDRAEA (253 aa)) enclose the BAR domain. 2 coiled-coil regions span residues 31–67 (IYED…LNHQ) and 177–204 (EKKL…LKEE). Positions 280–342 (PTYKRPGMGP…ASDYSTPSAG (63 aa)) are disordered. The segment covering 294 to 303 (ATASSSSSFS) has biased composition (low complexity). Ser298, Ser299, Ser301, and Ser303 each carry phosphoserine. Residues 407 to 466 (PAAEHVVALYDYAAQAAGDLSFHAGDRIEVVSRTDNQNEWWIGRLNGAQGQFPGNYVQLE) form the SH3 domain.

Has a role in DNA damage signaling as a part of stress response processes. In Schizosaccharomyces pombe (strain 972 / ATCC 24843) (Fission yeast), this protein is Protein hob1 (hob1).